Consider the following 314-residue polypeptide: Large ribosomal subunit protein uL10 (314 aa).

Residues 285–314 are disordered; that stretch reads GAAAGGAAAEEEKEEEEESDEEGGFGDLFG. Residues 293–308 are compositionally biased toward acidic residues; the sequence is AEEEKEEEEESDEEGG. A Phosphoserine; by CK1 modification is found at S303.

It belongs to the universal ribosomal protein uL10 family. Component of the large ribosomal subunit. P0 forms a pentameric complex by interaction with dimers of P1 and P2. Post-translationally, phosphorylated.

Ribosomal protein P0 is the functional equivalent of E.coli protein L10. The sequence is that of Large ribosomal subunit protein uL10 from Podospora anserina (Pleurage anserina).